Here is a 285-residue protein sequence, read N- to C-terminus: Bifunctional protein FolD (285 aa).

NADP(+) is bound by residues 166–168, Ser191, and Ile232; that span reads GAS.

The protein belongs to the tetrahydrofolate dehydrogenase/cyclohydrolase family. Homodimer.

The enzyme catalyses (6R)-5,10-methylene-5,6,7,8-tetrahydrofolate + NADP(+) = (6R)-5,10-methenyltetrahydrofolate + NADPH. The catalysed reaction is (6R)-5,10-methenyltetrahydrofolate + H2O = (6R)-10-formyltetrahydrofolate + H(+). It participates in one-carbon metabolism; tetrahydrofolate interconversion. Its function is as follows. Catalyzes the oxidation of 5,10-methylenetetrahydrofolate to 5,10-methenyltetrahydrofolate and then the hydrolysis of 5,10-methenyltetrahydrofolate to 10-formyltetrahydrofolate. This Edwardsiella ictaluri (strain 93-146) protein is Bifunctional protein FolD.